The chain runs to 79 residues: Acyl carrier protein (79 aa).

One can recognise a Carrier domain in the interval 2–77 (SDIEARVRKI…SAIDYANTHQ (76 aa)). The residue at position 37 (Ser37) is an O-(pantetheine 4'-phosphoryl)serine.

Belongs to the acyl carrier protein (ACP) family. In terms of processing, 4'-phosphopantetheine is transferred from CoA to a specific serine of apo-ACP by AcpS. This modification is essential for activity because fatty acids are bound in thioester linkage to the sulfhydryl of the prosthetic group.

It is found in the cytoplasm. Its pathway is lipid metabolism; fatty acid biosynthesis. Functionally, carrier of the growing fatty acid chain in fatty acid biosynthesis. This chain is Acyl carrier protein, found in Verminephrobacter eiseniae (strain EF01-2).